Consider the following 69-residue polypeptide: Toxin Tma3 (69 aa).

The region spanning 2–66 (KDDYPVDTAK…SPTKKSGRCN (65 aa)) is the LCN-type CS-alpha/beta domain. Cystine bridges form between Cys14-Cys65, Cys18-Cys41, Cys27-Cys48, and Cys31-Cys50.

This sequence belongs to the long (4 C-C) scorpion toxin superfamily. Sodium channel inhibitor family. In terms of tissue distribution, expressed by the venom gland.

Its subcellular location is the secreted. Functionally, inhibits voltage-gated sodium channels (Nav). This toxin shows insect lethality against crickets. This Tityus macrochirus (Scorpion) protein is Toxin Tma3.